A 102-amino-acid polypeptide reads, in one-letter code: Small ribosomal subunit protein uS10 (102 aa).

This sequence belongs to the universal ribosomal protein uS10 family. In terms of assembly, part of the 30S ribosomal subunit.

Its function is as follows. Involved in the binding of tRNA to the ribosomes. The polypeptide is Small ribosomal subunit protein uS10 (Geobacter sulfurreducens (strain ATCC 51573 / DSM 12127 / PCA)).